A 100-amino-acid polypeptide reads, in one-letter code: Nucleoid-associated protein Caur_0522 (100 aa).

Belongs to the YbaB/EbfC family. Homodimer.

Its subcellular location is the cytoplasm. The protein resides in the nucleoid. Binds to DNA and alters its conformation. May be involved in regulation of gene expression, nucleoid organization and DNA protection. The chain is Nucleoid-associated protein Caur_0522 from Chloroflexus aurantiacus (strain ATCC 29366 / DSM 635 / J-10-fl).